Here is an 84-residue protein sequence, read N- to C-terminus: Putative UPF0320 protein YAL068W-A (84 aa).

This sequence belongs to the UPF0320 family.

The sequence is that of Putative UPF0320 protein YAL068W-A from Saccharomyces cerevisiae (strain ATCC 204508 / S288c) (Baker's yeast).